The sequence spans 863 residues: MSVKAFDLVPAVEREQVMGEKVRINIECIECCGQHLYLGTNDCFIHHFLLEEHTTAKGKLAFNAQKLLHKYLGLKKPVVELKAASALERLIVLCDSAITVVDMVTLEPVPTGGAKLKGVTAFCINENPVTGDAFCVEMAVVLARRRAVQICTVHEDRVQMLKEVTTPEQPCALSLDGYNICLALSTQYMILNYSTGASQDLFPYDCEERKPIVKRIGREEFLLAAPGGLGMFANAEGISQRAPVSWSENVIAAAVCFPYVVALDEGFVTVHSMLDQQLKQTLSFRDGQLLQDFEGKVVVASSKAVYMLVPLPLERQIQDLLASHRVEEALTLTEAAQRNIPKEKYQILHRRILQQAGFIQFGQLQFLEAKEHFRKGQLDVRELISLYPLLLPASSSFTRCHPPLHEFADLNHLTQGDQEKVQRFKRFLISYLHEVRSSDIANGFHEDVDTALLKLYAETSHESLLDLLASENACLLADSAPWLEKHHKYYALGLLYHYNGQDAAALQMWVKIVNGDLQDSTRPDLFEYVVDFLSFCSNLDLVWRHADWALQKDQKIGVQIFTKRPTSEERRGQLNADDVITYLQKHSQALLLYLEHLVLEKKLQKEKYHTHLAVLYAEKVLGLISRPSTSEEQLSAARQKLQRLLKESNLYRVQLLLGKIQDSELLLLERATLHGKLEEHDKALHVLVHQLKDSSAAEEYCSWASASQDSSYRQNLFHQLLSVYLDPDVPGGAQTVAAVDLLNRHAEVFDAVRVLKLLPEDWSLPLLRPFLCGAMRATVHARCTSQVALGLARAQNLQLLHDRLKYRGGPVLVSEKKGCQLCHNTFSEPDCACLPGGTPVHINCVAKKALDLPHENAHHSNHT.

The CNH domain maps to 23 to 297 (RINIECIECC…QLLQDFEGKV (275 aa)). The stretch at 564–729 (RPTSEERRGQ…LLSVYLDPDV (166 aa)) is one CHCR repeat.

It belongs to the TRAP1 family. Component of the putative class C core vacuole/endosome tethering (CORVET) complex.

It is found in the cytoplasm. The protein resides in the early endosome. Plays a role in the TGF-beta signaling pathway. In terms of biological role, plays a role in vesicle-mediated protein trafficking of the endocytic membrane transport pathway. Believed to act as a component of the putative CORVET endosomal tethering complexes which is proposed to be involved in the Rab5-to-Rab7 endosome conversion probably implicating MON1A/B, and via binding SNAREs and SNARE complexes to mediate tethering and docking events during SNARE-mediated membrane fusion. The CORVET complex is proposed to function as a Rab5 effector to mediate early endosome fusion probably in specific endosome subpopulations. In Danio rerio (Zebrafish), this protein is Transforming growth factor-beta receptor-associated protein 1 homolog (tgfbrap1).